Here is a 400-residue protein sequence, read N- to C-terminus: Cytochrome b (400 aa).

Helical transmembrane passes span 32-52 (FGSL…TLAM), 76-98 (WLIR…LHIG), 113-133 (TWSI…LGYV), and 179-199 (FFSL…MHLI). His82 and His96 together coordinate heme b. Heme b contacts are provided by His183 and His197. His202 serves as a coordination point for a ubiquinone. A run of 4 helical transmembrane segments spans residues 226 to 246 (YLFK…IFVF), 290 to 310 (AVGV…PYLD), 322 to 342 (LSKV…QLGA), and 349 to 369 (FIVF…IIIP).

Belongs to the cytochrome b family. Fungal cytochrome b-c1 complex contains 10 subunits; 3 respiratory subunits, 2 core proteins and 5 low-molecular weight proteins. Cytochrome b-c1 complex is a homodimer. Heme b is required as a cofactor.

Its subcellular location is the mitochondrion inner membrane. In terms of biological role, component of the ubiquinol-cytochrome c reductase complex (complex III or cytochrome b-c1 complex) that is part of the mitochondrial respiratory chain. The b-c1 complex mediates electron transfer from ubiquinol to cytochrome c. Contributes to the generation of a proton gradient across the mitochondrial membrane that is then used for ATP synthesis. The sequence is that of Cytochrome b (cob) from Epidermophyton floccosum.